The primary structure comprises 466 residues: Exodeoxyribonuclease 7 large subunit (466 aa).

The protein belongs to the XseA family. Heterooligomer composed of large and small subunits.

The protein resides in the cytoplasm. It carries out the reaction Exonucleolytic cleavage in either 5'- to 3'- or 3'- to 5'-direction to yield nucleoside 5'-phosphates.. Its function is as follows. Bidirectionally degrades single-stranded DNA into large acid-insoluble oligonucleotides, which are then degraded further into small acid-soluble oligonucleotides. This is Exodeoxyribonuclease 7 large subunit from Ruthia magnifica subsp. Calyptogena magnifica.